The following is a 130-amino-acid chain: Glycine cleavage system H protein (130 aa).

The Lipoyl-binding domain occupies 25 to 106; it reads TALIGISDFA…PFDSWMIKVK (82 aa). Lys66 carries the post-translational modification N6-lipoyllysine.

It belongs to the GcvH family. As to quaternary structure, the glycine cleavage system is composed of four proteins: P, T, L and H. It depends on (R)-lipoate as a cofactor.

Its function is as follows. The glycine cleavage system catalyzes the degradation of glycine. The H protein shuttles the methylamine group of glycine from the P protein to the T protein. The protein is Glycine cleavage system H protein of Leptospira borgpetersenii serovar Hardjo-bovis (strain JB197).